The sequence spans 266 residues: Gap junction beta-4 protein (266 aa).

An intramembrane segment occupies 2–13 (NWGFLQGILSGV). Residues 14–20 (NKYSTAL) are Cytoplasmic-facing. Residues 21 to 40 (GRIWLSVVFIFRVLVYVVAA) form a helical membrane-spanning segment. The Extracellular portion of the chain corresponds to 41–73 (EEVWDDDQKDFICNTKQPGCPNVCYDEFFPVSH). 3 cysteine pairs are disulfide-bonded: cysteine 53–cysteine 175, cysteine 60–cysteine 169, and cysteine 64–cysteine 164. Residues 74–94 (VRLWALQLILVTCPSLLVVMH) traverse the membrane as a helical segment. Residues 95 to 130 (VAYREERERKHRLKHGPNAPALYSNLSKKRGGLWWT) are Cytoplasmic-facing. A helical membrane pass occupies residues 131–151 (YLLSLIFKAAVDSGFLYIFHC). The Extracellular portion of the chain corresponds to 152–184 (IYKDYDMPRVVACSVTPCPHTVDCYIARPTEKK). Residues 185-205 (VFTYFMVVTAAICILLNLSEV) traverse the membrane as a helical segment. Residues 206-266 (VYLVGKRCME…MATVDAGVYP (61 aa)) lie on the Cytoplasmic side of the membrane.

This sequence belongs to the connexin family. Beta-type (group I) subfamily. As to quaternary structure, a hemichannel or connexon is composed of a hexamer of connexins. A functional gap junction is formed by the apposition of two hemichannels. Forms heteromeric channels with GJB2. As to expression, detected in cochlea (at protein level). Detected in cochlea. Expressed in skin.

It localises to the cell membrane. Its subcellular location is the cell junction. The protein resides in the gap junction. Structural component of gap junctions. Gap junctions are dodecameric channels that connect the cytoplasm of adjoining cells. They are formed by the docking of two hexameric hemichannels, one from each cell membrane. Small molecules and ions diffuse from one cell to a neighboring cell via the central pore. The polypeptide is Gap junction beta-4 protein (Gjb4) (Mus musculus (Mouse)).